A 300-amino-acid chain; its full sequence is Protoheme IX farnesyltransferase (300 aa).

9 consecutive transmembrane segments (helical) span residues 31–51, 52–72, 92–112, 123–145, 152–172, 179–199, 225–245, 247–267, and 280–300; these read VMSLVVFTGFSGMWLAPNSLH, PFISVIALICIAIGAGSAGAI, IVRGAIEADEALSFGLIMAFF, FLSALLLLFTIFYYICIYTMWLK, IVIGGAAGALPPVIGYASVSG, VILFLIIFIWTPPHSWALALF, ILIYSVLLFLTSLMPFFVGMS, IIYLVIAAVLGLVFLYYSISL, and FFAYSIFYLFFIFLLLDFCRV.

The protein belongs to the UbiA prenyltransferase family. Protoheme IX farnesyltransferase subfamily.

Its subcellular location is the cell inner membrane. The catalysed reaction is heme b + (2E,6E)-farnesyl diphosphate + H2O = Fe(II)-heme o + diphosphate. It participates in porphyrin-containing compound metabolism; heme O biosynthesis; heme O from protoheme: step 1/1. In terms of biological role, converts heme B (protoheme IX) to heme O by substitution of the vinyl group on carbon 2 of heme B porphyrin ring with a hydroxyethyl farnesyl side group. The chain is Protoheme IX farnesyltransferase from Rickettsia bellii (strain OSU 85-389).